Reading from the N-terminus, the 327-residue chain is Flotillin-like protein FloA (327 aa).

The next 2 helical transmembrane spans lie at Val-6–Val-26 and Ile-28–Gly-48.

This sequence belongs to the flotillin-like FloA family. As to quaternary structure, homooligomerizes.

It is found in the cell membrane. The protein resides in the membrane raft. Functionally, found in functional membrane microdomains (FMM) that may be equivalent to eukaryotic membrane rafts. FMMs are highly dynamic and increase in number as cells age. Flotillins are thought to be important factors in membrane fluidity. The chain is Flotillin-like protein FloA from Priestia megaterium (strain DSM 319 / IMG 1521) (Bacillus megaterium).